We begin with the raw amino-acid sequence, 389 residues long: MVLINQLGAVLAVCATLTVAAPTKGKARFNVPQVAIPKKMVHHPAVSYARALHKFGMKVPKTVQDAAKGSVPTTPTPSDEQYVTQVTVGEGKLNLDLDTGSGDLQGHNLYKPTSNSKRLNGYSWQISYGDMSSAGGDVFLDTVSIGDVTASSQAVESAKKVSDQFAKDKATDGLMGLSFSVLNTVQPKPQTTFLDTVLSQLEKPLFTCTLKHGEPGSYDFGYIDDAKHSGEITYTQVDNSEGWWGFTADSYSIGGPNTTSFRGDSSGMANGGSISGIADTGTTLMLLSDDVVGEYYGQVQGATNDQQQGGYIFPCDAQLPDFTLSIGGYNAVVPGKFMNYQEIDGSMCFGGLQSSGSSGGPNIFGDVFLKSQFVVWDTQGPRIGFAPQA.

Residues 1 to 20 form the signal peptide; sequence MVLINQLGAVLAVCATLTVA. A propeptide spans 21–67 (activation peptide); it reads APTKGKARFNVPQVAIPKKMVHHPAVSYARALHKFGMKVPKTVQDAA. The 305-residue stretch at 82–386 folds into the Peptidase A1 domain; that stretch reads YVTQVTVGEG…DTQGPRIGFA (305 aa). Residue Asp-98 is part of the active site. Asn-257 is a glycosylation site (N-linked (GlcNAc...) asparagine). The active site involves Asp-279. The cysteines at positions 315 and 348 are disulfide-linked.

The protein belongs to the peptidase A1 family. As to quaternary structure, monomer.

The protein resides in the secreted. Functionally, secreted aspartic endopeptidase that allows assimilation of proteinaceous substrates. The scissile peptide bond is attacked by a nucleophilic water molecule activated by two aspartic residues in the active site. Shows a broad primary substrate specificity. Favors hydrophobic residues at the P1 and P1' positions. The chain is Aspartic protease pepA from Arthroderma otae (strain ATCC MYA-4605 / CBS 113480) (Microsporum canis).